The primary structure comprises 637 residues: Threonine--tRNA ligase (637 aa).

In terms of domain architecture, TGS spans 1-61; the sequence is MLNITLPDGS…VEDSAVQIIT (61 aa). The catalytic stretch occupies residues 242-533; that stretch reads DHRKLGKQLD…LIENHAGSFP (292 aa). Positions 333, 384, and 510 each coordinate Zn(2+).

Belongs to the class-II aminoacyl-tRNA synthetase family. In terms of assembly, homodimer. The cofactor is Zn(2+).

The protein resides in the cytoplasm. It catalyses the reaction tRNA(Thr) + L-threonine + ATP = L-threonyl-tRNA(Thr) + AMP + diphosphate + H(+). In terms of biological role, catalyzes the attachment of threonine to tRNA(Thr) in a two-step reaction: L-threonine is first activated by ATP to form Thr-AMP and then transferred to the acceptor end of tRNA(Thr). Also edits incorrectly charged L-seryl-tRNA(Thr). This Neisseria meningitidis serogroup B (strain ATCC BAA-335 / MC58) protein is Threonine--tRNA ligase.